The sequence spans 355 residues: MTARLRPELAGLPVYVPGKNVPGSIKLASNETVYGPLPSVHAAIERAVAIVNRYPDNACVDLKAALAMHLGSDVAPEQIAVGSGSVTLCQQLVQITSAAGDEVMMGWRSFECYLPIVQVAGAIAVKVPLREHTYDLDAMLAAITDRTRLIFVCNPNNPTSTVVDPDALVRFVDAVPADILIAIDEAYVEYIRDGLLPNSLELALSRSNVVVLRTFSKAYGLAGLRVGYAIGHPELITALDKVVMPFAVTNVAQAAAIASLEASGELMARTDALVAERTRVSTTLRDAGFELPPSQANFLWLPLGSRTEDFVQEAANARLVVRPFASEGVRVTIGAPAENDALLQFACDWIARTER.

Lys-217 is modified (N6-(pyridoxal phosphate)lysine).

Belongs to the class-II pyridoxal-phosphate-dependent aminotransferase family. In terms of assembly, homodimer. Pyridoxal 5'-phosphate is required as a cofactor.

The catalysed reaction is an aromatic L-alpha-amino acid + 2-oxoglutarate = an aromatic oxo-acid + L-glutamate. In terms of biological role, aminotransferase that catalyzes the conversion of aromatic amino acids and 2-oxoglutarate into corresponding aromatic oxo acids and L-glutamate. This chain is Aromatic amino acid aminotransferase, found in Mycobacterium avium (strain 104).